A 513-amino-acid chain; its full sequence is Glucose-1-phosphate adenylyltransferase small subunit, chloroplastic/amyloplastic (513 aa).

A chloroplast-targeting transit peptide spans 1–64 (MAMAAAASPS…RRPFFFSPRA (64 aa)).

It belongs to the bacterial/plant glucose-1-phosphate adenylyltransferase family. As to quaternary structure, heterotetramer. As to expression, leaves and starchy endosperm.

Its subcellular location is the plastid. It is found in the chloroplast. The protein localises to the amyloplast. It catalyses the reaction alpha-D-glucose 1-phosphate + ATP + H(+) = ADP-alpha-D-glucose + diphosphate. It functions in the pathway glycan biosynthesis; starch biosynthesis. Its activity is regulated as follows. Activated by 3'phosphoglycerate, inhibited by orthophosphate. Allosteric regulation. In terms of biological role, this protein plays a role in synthesis of starch. It catalyzes the synthesis of the activated glycosyl donor, ADP-glucose from Glc-1-P and ATP. This chain is Glucose-1-phosphate adenylyltransferase small subunit, chloroplastic/amyloplastic, found in Hordeum vulgare (Barley).